The chain runs to 88 residues: Small ribosomal subunit protein bS20 (88 aa).

Residues methionine 1 to methionine 28 are disordered.

Binds directly to 16S ribosomal RNA. The chain is Small ribosomal subunit protein bS20 from Rhodopseudomonas palustris (strain ATCC BAA-98 / CGA009).